Reading from the N-terminus, the 247-residue chain is Uridylate kinase (247 aa).

21–24 (KVSG) lines the ATP pocket. Residue G63 participates in UMP binding. Residues G64 and R68 each coordinate ATP. UMP is bound by residues D83 and 144–151 (TGNPFCTT). ATP-binding residues include T171, Q172, Y177, and D180.

It belongs to the UMP kinase family. As to quaternary structure, homohexamer.

The protein resides in the cytoplasm. It catalyses the reaction UMP + ATP = UDP + ADP. It participates in pyrimidine metabolism; CTP biosynthesis via de novo pathway; UDP from UMP (UMPK route): step 1/1. Its activity is regulated as follows. Inhibited by UTP. In terms of biological role, catalyzes the reversible phosphorylation of UMP to UDP. The chain is Uridylate kinase from Rickettsia rickettsii (strain Sheila Smith).